The primary structure comprises 319 residues: MARAPRSPHPARSRETSRAHPPYGTRADRAPGRGRDRDRSPDSPGNTSSRDGGRSPDRARRELSQNFLARRAVAERVARLVRPAPGGLLLEVGAGRGVLTEALAPYCGRLVAHEIDPRLLPALRDRFGGPHHAHVRISGGDFLAAPVPREPFALAGNIPYSRTAGIVDWALRARTLTSATFVTQLEYARKRTGDYGRWSLLTVRTWPRHEWRLLGRVSRREFRPVPRVDSGILRIERRERPLLPSAALGDYHRMVELGFSGVGGSLYASLRRAHRAGPLDAAFRAARLDRSVVVAYVTPEQWLTVFRTLRPVRSRPAGR.

Positions 1–59 (MARAPRSPHPARSRETSRAHPPYGTRADRAPGRGRDRDRSPDSPGNTSSRDGGRSPDRA) are disordered. Residues 26-41 (RADRAPGRGRDRDRSP) are compositionally biased toward basic and acidic residues. Residues asparagine 66, leucine 68, glycine 93, glutamate 114, aspartate 141, and asparagine 157 each coordinate S-adenosyl-L-methionine.

It belongs to the class I-like SAM-binding methyltransferase superfamily. rRNA adenine N(6)-methyltransferase family.

The enzyme catalyses adenosine(2085) in 23S rRNA + 2 S-adenosyl-L-methionine = N(6)-dimethyladenosine(2085) in 23S rRNA + 2 S-adenosyl-L-homocysteine + 2 H(+). This protein produces a dimethylation of the adenine residue at position 2085 in 23S rRNA, resulting in reduced affinity between ribosomes and macrolide-lincosamide-streptogramin B antibiotics. The sequence is that of rRNA adenine N-6-methyltransferase (ermSF) from Streptomyces fradiae (Streptomyces roseoflavus).